Reading from the N-terminus, the 398-residue chain is Carboxyaminopropylagmatine dehydrogenase (398 aa).

It belongs to the saccharopine dehydrogenase family.

It carries out the reaction N(1)-[(S)-3-amino-3-carboxypropyl]agmatine + NADP(+) + H2O = L-aspartate 4-semialdehyde + agmatine + NADPH + H(+). It functions in the pathway amine and polyamine biosynthesis; spermidine biosynthesis. Its function is as follows. Dehydrogenase involved in the biosynthesis of spermidine via the carboxyaminopropylagmatine (CAPA) pathway. Catalyzes the reductive condensation of agmatine and L-aspartate-beta-semialdehyde (ASA) into CAPA. Shows activity toward putrescine and 1,3-diaminopropane, but the catalytic efficiency is three to four orders of magnitude lower than that for agmatine. Cannot use cadaverine or spermidine. In Synechocystis sp. (strain ATCC 27184 / PCC 6803 / Kazusa), this protein is Carboxyaminopropylagmatine dehydrogenase.